Reading from the N-terminus, the 296-residue chain is NADH-cytochrome b5 reductase 1 (296 aa).

The helical transmembrane segment at 11–31 (LSAVLVKFAPFAVAVIAILAA) threads the bilayer. The region spanning 47-152 (SEFQNFVLKE…RGPKGAMVYT (106 aa)) is the FAD-binding FR-type domain. FAD is bound by residues 132–147 (TTLKIGDTLKVRGPKG) and 158–195 (HIGMIAGGTGITPMLQIIKAIIRNRPRNGGNDTTKIDL).

The protein belongs to the flavoprotein pyridine nucleotide cytochrome reductase family. Monomer. Component of the 2-(3-amino-3-carboxypropyl)histidine synthase complex composed of dph1, dph2, dph3 and a NADH-dependent reductase, predominantly cbr1. FAD serves as cofactor.

The protein resides in the mitochondrion outer membrane. The catalysed reaction is 2 Fe(III)-[cytochrome b5] + NADH = 2 Fe(II)-[cytochrome b5] + NAD(+) + H(+). The enzyme catalyses 2 Fe(3+)-[Dph3] + NADH = 2 Fe(2+)-[Dph3] + NAD(+) + H(+). It functions in the pathway protein modification; peptidyl-diphthamide biosynthesis. NADH-dependent reductase for dph3 and cytochrome b5. Required for the first step of diphthamide biosynthesis, a post-translational modification of histidine which occurs in elongation factor 2. Dph1 and dph2 transfer a 3-amino-3-carboxypropyl (ACP) group from S-adenosyl-L-methionine (SAM) to a histidine residue, the reaction is assisted by a reduction system comprising dph3 and a NADH-dependent reductase, predominantly cbr1. By reducing dph3, also involved in the formation of the tRNA wobble base modification mcm5s 2U (5-methoxycarbonylmethyl-2-thiouridine), mediated by the elongator complex. The cytochrome b5/NADH cytochrome b5 reductase electron transfer system supports the catalytic activity of several sterol biosynthetic enzymes. The sequence is that of NADH-cytochrome b5 reductase 1 (cbr1) from Aspergillus terreus (strain NIH 2624 / FGSC A1156).